The sequence spans 672 residues: Negative growth regulatory protein NGR1 (672 aa).

An N-acetylmethionine modification is found at Met-1. Polar residues-rich tracts occupy residues 1 to 13 (MMSNVANASQRQE) and 23 to 32 (SSTVETSTEP). 2 disordered regions span residues 1-40 (MMSNVANASQRQENPYIIPLPPSSTVETSTEPPRTLWMGD) and 77-102 (SSTSSSNNNTSEENAENQQSASNSTD). Met-2 carries the post-translational modification N-acetylserine. RRM domains follow at residues 36–159 (LWMG…YSPT), 192–271 (FSLF…YATP), and 360–432 (TTVF…WGRP). Over residues 77 to 96 (SSTSSSNNNTSEENAENQQS) the composition is skewed to low complexity. Ser-524 is modified (phosphoserine). Residues 640–672 (LNIAPNSNNSKSSIMNKHPNRNNVPPIHPSLLH) form a disordered region. Positions 645–656 (NSNNSKSSIMNK) are enriched in low complexity.

In terms of biological role, may be an RNA-binding protein involved in control of an RNA processing pathway that influences the regulation of cell growth in early log phase. Can bind to RNA and single-stranded DNA but not double-stranded DNA. This chain is Negative growth regulatory protein NGR1 (NGR1), found in Saccharomyces cerevisiae (strain ATCC 204508 / S288c) (Baker's yeast).